We begin with the raw amino-acid sequence, 983 residues long: RNA-directed RNA polymerase (983 aa).

One can recognise a RdRp catalytic domain in the interval 579–701 (TELVETDYSK…SGNVSDALLS (123 aa)). The interval 879–983 (EVQAGPSQQP…RQRQRRRSPV (105 aa)) is disordered. The span at 883–899 (GPSQQPQTDKDGTSPTG) shows a compositional bias: polar residues. Over residues 914-937 (ADGRACRSRRSDRSPGKRDANVRD) the composition is skewed to basic and acidic residues. A compositionally biased stretch (low complexity) spans 943 to 960 (STTPPRSRPSVPGPSSSG).

It belongs to the nodaviridae RNA polymerase family.

The enzyme catalyses RNA(n) + a ribonucleoside 5'-triphosphate = RNA(n+1) + diphosphate. Its function is as follows. RNA-dependent RNA polymerase which replicates the viral genome composed of 2 RNA segments, RNA1 and RNA2. The chain is RNA-directed RNA polymerase from Dicentrarchus labrax (European seabass).